The chain runs to 166 residues: CDP-archaeol synthase (166 aa).

Helical transmembrane passes span 42-62, 73-93, 104-124, and 128-148; these read FFGGVVSGVLVGLIEIWAATA, FLSVTLLATGALLGDLAKSFL, SWFLADQYDLVVGSFLLILIF, and WLFGTITLPIAVWIVVMTPLL.

It belongs to the CDP-archaeol synthase family. Mg(2+) is required as a cofactor.

It is found in the cell membrane. It carries out the reaction 2,3-bis-O-(geranylgeranyl)-sn-glycerol 1-phosphate + CTP + H(+) = CDP-2,3-bis-O-(geranylgeranyl)-sn-glycerol + diphosphate. Its pathway is membrane lipid metabolism; glycerophospholipid metabolism. Catalyzes the formation of CDP-2,3-bis-(O-geranylgeranyl)-sn-glycerol (CDP-archaeol) from 2,3-bis-(O-geranylgeranyl)-sn-glycerol 1-phosphate (DGGGP) and CTP. This reaction is the third ether-bond-formation step in the biosynthesis of archaeal membrane lipids. The chain is CDP-archaeol synthase from Methanoculleus marisnigri (strain ATCC 35101 / DSM 1498 / JR1).